The following is a 212-amino-acid chain: Orotate phosphoribosyltransferase (212 aa).

5-phospho-alpha-D-ribose 1-diphosphate-binding positions include Arg95, Lys99, His101, and 121-129; that span reads DDLITTGGS. An orotate-binding site is contributed by Thr125.

It belongs to the purine/pyrimidine phosphoribosyltransferase family. PyrE subfamily. As to quaternary structure, homodimer. Mg(2+) is required as a cofactor.

It carries out the reaction orotidine 5'-phosphate + diphosphate = orotate + 5-phospho-alpha-D-ribose 1-diphosphate. The protein operates within pyrimidine metabolism; UMP biosynthesis via de novo pathway; UMP from orotate: step 1/2. Its function is as follows. Catalyzes the transfer of a ribosyl phosphate group from 5-phosphoribose 1-diphosphate to orotate, leading to the formation of orotidine monophosphate (OMP). The sequence is that of Orotate phosphoribosyltransferase from Lactobacillus johnsonii (strain CNCM I-12250 / La1 / NCC 533).